The chain runs to 433 residues: C2H2 type master regulator of conidiophore development brlA (433 aa).

Disordered stretches follow at residues 24-49, 240-269, and 286-306; these read SDCP…LYSQ, KSHT…ISGH, and MMQR…LRSN. Low complexity predominate over residues 30 to 49; that stretch reads TSSFSPLDSPTPTPTSLYSQ. The span at 240–264 shows a compositional bias: polar residues; sequence KSHTPSTPHRSVSMGTPSGSDTPVS. The span at 288-302 shows a compositional bias: basic residues; sequence QRHRQPSRKPSKKQL. C2H2-type zinc fingers lie at residues 321 to 345 and 351 to 376; these read FKCK…MKSH and HVCW…TKTH. The tract at residues 391–423 is disordered; the sequence is ETSQDFDPDFRGQLTPDGRPIYGSKLEDSMPDC.

Its subcellular location is the nucleus. BrlA, abaA and wetA are pivotal regulators of conidiophore development and conidium maturation. They act individually and together to regulate their own expression and that of numerous other sporulation-specific genes. Binds promoters of target genes at brlA response elements (BREs) containing the conserved sequence 5'-(C/A)(A/G)AGGG(G/A)-3'. Regulates genes involved in conidiogenesis. The protein is C2H2 type master regulator of conidiophore development brlA of Penicillium digitatum (strain PHI26 / CECT 20796) (Green mold).